The sequence spans 150 residues: Arginine repressor (150 aa).

It belongs to the ArgR family.

The protein resides in the cytoplasm. The protein operates within amino-acid biosynthesis; L-arginine biosynthesis [regulation]. Its function is as follows. Regulates arginine biosynthesis genes. This Staphylococcus carnosus (strain TM300) protein is Arginine repressor.